Reading from the N-terminus, the 559-residue chain is Berberine bridge enzyme-like A (559 aa).

Residues 1–21 form the signal peptide; it reads MFPLIILISFSLASLSETATG. 2 N-linked (GlcNAc...) asparagine glycosylation sites follow: Asn-25 and Asn-37. Residues Cys-29 and Cys-86 are joined by a disulfide bond. Positions 64 to 240 constitute an FAD-binding PCMH-type domain; sequence FMPKPTFIIL…YAWKIRLLKV (177 aa). Pros-8alpha-FAD histidine is present on His-101. N-linked (GlcNAc...) asparagine glycosylation is found at Asn-321, Asn-355, and Asn-494.

Belongs to the oxygen-dependent FAD-linked oxidoreductase family. The cofactor is FAD. Mostly expressed in roots.

Its subcellular location is the vacuole. It functions in the pathway alkaloid biosynthesis; nicotine biosynthesis. Involved in the biosynthesis of pyridine alkaloid natural products, leading mainly to the production of anabasine, anatabine, nicotine and nornicotine, effective deterrents against herbivores with antiparasitic and pesticide properties (neurotoxins); nornicotine serves as the precursor in the synthesis of the carcinogen compound N'-nitrosonornicotine (NNN). Catalyzes a late oxidation step subsequent to the pyridine ring condensation reaction in the biosynthesis of alkaloids. The sequence is that of Berberine bridge enzyme-like A from Nicotiana tabacum (Common tobacco).